A 316-amino-acid polypeptide reads, in one-letter code: Pantothenate kinase (316 aa).

95-102 (GSVAVGKS) serves as a coordination point for ATP.

The protein belongs to the prokaryotic pantothenate kinase family.

The protein localises to the cytoplasm. The enzyme catalyses (R)-pantothenate + ATP = (R)-4'-phosphopantothenate + ADP + H(+). It participates in cofactor biosynthesis; coenzyme A biosynthesis; CoA from (R)-pantothenate: step 1/5. This Shewanella sediminis (strain HAW-EB3) protein is Pantothenate kinase.